Here is a 314-residue protein sequence, read N- to C-terminus: Thymidylate synthase (314 aa).

DUMP is bound by residues Arg21 and 176-177 (RR). The Nucleophile role is filled by Cys196. DUMP is bound by residues 216-219 (RSAD), Asn227, and 257-259 (HLY). Residue Asp219 coordinates (6R)-5,10-methylene-5,6,7,8-tetrahydrofolate. Position 313 (Ser313) interacts with (6R)-5,10-methylene-5,6,7,8-tetrahydrofolate.

Belongs to the thymidylate synthase family. Bacterial-type ThyA subfamily. As to quaternary structure, homodimer.

The protein localises to the cytoplasm. It catalyses the reaction dUMP + (6R)-5,10-methylene-5,6,7,8-tetrahydrofolate = 7,8-dihydrofolate + dTMP. It participates in pyrimidine metabolism; dTTP biosynthesis. Its function is as follows. Catalyzes the reductive methylation of 2'-deoxyuridine-5'-monophosphate (dUMP) to 2'-deoxythymidine-5'-monophosphate (dTMP) while utilizing 5,10-methylenetetrahydrofolate (mTHF) as the methyl donor and reductant in the reaction, yielding dihydrofolate (DHF) as a by-product. This enzymatic reaction provides an intracellular de novo source of dTMP, an essential precursor for DNA biosynthesis. The polypeptide is Thymidylate synthase (Listeria monocytogenes serotype 4b (strain CLIP80459)).